The primary structure comprises 312 residues: Malate dehydrogenase (312 aa).

Residues 7–13 and aspartate 34 each bind NAD(+); that span reads GAAGGIG. Substrate is bound by residues arginine 81 and arginine 87. Residues asparagine 94 and 117-119 contribute to the NAD(+) site; that span reads ITN. Residues asparagine 119 and arginine 153 each coordinate substrate. Catalysis depends on histidine 177, which acts as the Proton acceptor. Methionine 227 is an NAD(+) binding site.

It belongs to the LDH/MDH superfamily. MDH type 1 family. Homodimer.

It carries out the reaction (S)-malate + NAD(+) = oxaloacetate + NADH + H(+). Its function is as follows. Catalyzes the reversible oxidation of malate to oxaloacetate. This is Malate dehydrogenase from Escherichia coli O7:K1 (strain IAI39 / ExPEC).